A 378-amino-acid chain; its full sequence is Probable 3-hydroxyisobutyryl-CoA hydrolase 3 (378 aa).

Substrate is bound by residues glutamate 138 and aspartate 146.

It belongs to the enoyl-CoA hydratase/isomerase family.

Its subcellular location is the peroxisome. The enzyme catalyses 3-hydroxy-2-methylpropanoyl-CoA + H2O = 3-hydroxy-2-methylpropanoate + CoA + H(+). It participates in amino-acid degradation; L-valine degradation. Functionally, involved in valine catabolism. The sequence is that of Probable 3-hydroxyisobutyryl-CoA hydrolase 3 from Arabidopsis thaliana (Mouse-ear cress).